The chain runs to 226 residues: N-(5'-phosphoribosyl)anthranilate isomerase (226 aa).

This sequence belongs to the TrpF family.

The catalysed reaction is N-(5-phospho-beta-D-ribosyl)anthranilate = 1-(2-carboxyphenylamino)-1-deoxy-D-ribulose 5-phosphate. It participates in amino-acid biosynthesis; L-tryptophan biosynthesis; L-tryptophan from chorismate: step 3/5. The chain is N-(5'-phosphoribosyl)anthranilate isomerase (TRP1) from Saccharomyces kudriavzevii (strain ATCC MYA-4449 / AS 2.2408 / CBS 8840 / NBRC 1802 / NCYC 2889) (Yeast).